We begin with the raw amino-acid sequence, 501 residues long: Fumarate reductase 2 (501 aa).

The transit peptide at 1–32 (MIRSVRRVFIYVSIFVLIIVLKRTLSGTDQTS) directs the protein to the mitochondrion. FAD is bound at residue 37 to 51 (VVVIGSGLAGLTTSN). Active-site residues include His281 and Arg304.

This sequence belongs to the FAD-dependent oxidoreductase 2 family. FRD/SDH subfamily. FAD is required as a cofactor.

The protein localises to the mitochondrion. It catalyses the reaction succinate + NAD(+) = fumarate + NADH + H(+). Functionally, irreversibly catalyzes the reduction of fumarate to succinate. Together with the second isozyme of soluble fumarate reductase (FRD1), essential for anaerobic growth. Involved in maintaining redox balance during oxygen deficiency conditions. Reduction of fumarate is the main source of succinate during fermentation, and under anaerobic conditions, the formation of succinate is strictly required for the reoxidation of FADH(2). This is Fumarate reductase 2 (OSM1) from Saccharomyces cerevisiae (strain ATCC 204508 / S288c) (Baker's yeast).